We begin with the raw amino-acid sequence, 518 residues long: 12S seed storage globulin 2 (518 aa).

The N-terminal stretch at 1-24 (MATTRFPSLLFYSYIFLLCNGSMA) is a signal peptide. Intrachain disulfides connect cysteine 45/cysteine 78 and cysteine 121/cysteine 324. Residues 50 to 240 (LQAFEPLRQV…ALGISQQVAQ (191 aa)) form the Cupin type-1 1 domain. The tract at residues 280 to 311 (IQSQEEQSTQYQVGQSPQYQEGQSTQYQPGQS) is disordered. A Cupin type-1 2 domain is found at 330–479 (QNIENPKRAD…AYRISRQEAQ (150 aa)). The segment at 482 to 518 (KNNRGEEFDAFTPKFTQTGSQSYQDEGESSSTEKASE) is disordered. A compositionally biased stretch (polar residues) spans 495 to 518 (KFTQTGSQSYQDEGESSSTEKASE).

It belongs to the 11S seed storage protein (globulins) family. In terms of assembly, hexamer; each subunit is composed of an acidic and a basic chain derived from a single precursor and linked by a disulfide bond.

Functionally, this is a seed storage protein. The chain is 12S seed storage globulin 2 from Avena sativa (Oat).